The sequence spans 56 residues: Large ribosomal subunit protein bL32B (56 aa).

Positions 1-19 (MAVPKRRMSRSNTRHRRAQ) are enriched in basic residues. The disordered stretch occupies residues 1–22 (MAVPKRRMSRSNTRHRRAQWKA).

This sequence belongs to the bacterial ribosomal protein bL32 family.

The chain is Large ribosomal subunit protein bL32B (rpmF2) from Streptomyces coelicolor (strain ATCC BAA-471 / A3(2) / M145).